Here is a 62-residue protein sequence, read N- to C-terminus: Photosystem II reaction center protein Z (62 aa).

The next 2 helical transmembrane spans lie at 8–28 (AVFALIATSSILLISVPVVFA) and 41–61 (FSGTSLWIGLVFLVGILNSLI).

This sequence belongs to the PsbZ family. PSII is composed of 1 copy each of membrane proteins PsbA, PsbB, PsbC, PsbD, PsbE, PsbF, PsbH, PsbI, PsbJ, PsbK, PsbL, PsbM, PsbT, PsbY, PsbZ, Psb30/Ycf12, at least 3 peripheral proteins of the oxygen-evolving complex and a large number of cofactors. It forms dimeric complexes.

Its subcellular location is the plastid. The protein localises to the chloroplast thylakoid membrane. Functionally, may control the interaction of photosystem II (PSII) cores with the light-harvesting antenna, regulates electron flow through the 2 photosystem reaction centers. PSII is a light-driven water plastoquinone oxidoreductase, using light energy to abstract electrons from H(2)O, generating a proton gradient subsequently used for ATP formation. The sequence is that of Photosystem II reaction center protein Z from Jasminum nudiflorum (Winter jasmine).